The primary structure comprises 142 residues: MESMGNNSPGPEIRALARNIRMSAHKARKVINQIRGCSYGQALMILELMPYGACYPISQLIHSAAANANHNMGLNKANLLVSRVEVNEGAVFKRVQPRAQGRGYPIQKPTCHITIVLEEISRSNDPIMSIESRKRGYVWRRK.

The protein belongs to the universal ribosomal protein uL22 family. Part of the 50S ribosomal subunit.

The protein localises to the plastid. Its subcellular location is the chloroplast. Its function is as follows. This protein binds specifically to 23S rRNA. The globular domain of the protein is located near the polypeptide exit tunnel on the outside of the subunit, while an extended beta-hairpin is found that lines the wall of the exit tunnel in the center of the 70S ribosome. The sequence is that of Large ribosomal subunit protein uL22c (rpl22) from Picea abies (Norway spruce).